An 87-amino-acid chain; its full sequence is Probable Fe(2+)-trafficking protein (87 aa).

The protein belongs to the Fe(2+)-trafficking protein family.

Could be a mediator in iron transactions between iron acquisition and iron-requiring processes, such as synthesis and/or repair of Fe-S clusters in biosynthetic enzymes. The chain is Probable Fe(2+)-trafficking protein from Francisella tularensis subsp. mediasiatica (strain FSC147).